A 630-amino-acid polypeptide reads, in one-letter code: Chaperone protein DnaK (630 aa).

T197 is subject to Phosphothreonine; by autocatalysis. Over residues 604-618 (KNNESVKNNESVKNN) the composition is skewed to polar residues. Residues 604–630 (KNNESVKNNESVKNNESVKDVDFEEIK) form a disordered region. Over residues 619–630 (ESVKDVDFEEIK) the composition is skewed to basic and acidic residues.

It belongs to the heat shock protein 70 family.

Acts as a chaperone. The polypeptide is Chaperone protein DnaK (Karelsulcia muelleri (strain GWSS) (Sulcia muelleri)).